The sequence spans 201 residues: Recombination protein RecR (201 aa).

Residues 60–75 (CSCCGNVDTSDPCTIC) form a C4-type zinc finger. In terms of domain architecture, Toprim spans 83–178 (ATLIVVEDVS…RVTRLAHGVP (96 aa)).

Belongs to the RecR family.

Functionally, may play a role in DNA repair. It seems to be involved in an RecBC-independent recombinational process of DNA repair. It may act with RecF and RecO. This is Recombination protein RecR from Brucella melitensis biotype 1 (strain ATCC 23456 / CCUG 17765 / NCTC 10094 / 16M).